Reading from the N-terminus, the 61-residue chain is UPF0391 membrane protein Ajs_0703 (61 aa).

Helical transmembrane passes span 5-25 (AIIFAIISLIAGALGFTGVAA) and 33-53 (VLFVVFLVLAVLFVVLALLGI).

It belongs to the UPF0391 family.

It is found in the cell membrane. This is UPF0391 membrane protein Ajs_0703 from Acidovorax sp. (strain JS42).